Here is a 459-residue protein sequence, read N- to C-terminus: Alpha-N-acetylgalactosaminidase (459 aa).

Positions 1–31 (MHNIHRRHFLKAAGAVTAGLVTANIALNANA) form a signal peptide, tat-type signal. NAD(+) is bound by residues 64–65 (ER), aspartate 86, 135–138 (WEWH), 155–156 (EV), and asparagine 184. Substrate is bound by residues tyrosine 213, arginine 232, 244–247 (YPTH), and tyrosine 326. An NAD(+)-binding site is contributed by tyrosine 244.

Belongs to the Gfo/Idh/MocA family. Glycosyl hydrolase 109 subfamily. The cofactor is NAD(+). Post-translationally, predicted to be exported by the Tat system. The position of the signal peptide cleavage has not been experimentally proven.

The enzyme catalyses Cleavage of non-reducing alpha-(1-&gt;3)-N-acetylgalactosamine residues from human blood group A and AB mucin glycoproteins, Forssman hapten and blood group A lacto series glycolipids.. Its function is as follows. Glycosidase that has specific alpha-N-acetylgalactosaminidase activity. This is Alpha-N-acetylgalactosaminidase (nagA) from Shewanella oneidensis (strain ATCC 700550 / JCM 31522 / CIP 106686 / LMG 19005 / NCIMB 14063 / MR-1).